A 332-amino-acid polypeptide reads, in one-letter code: Phosphate acyltransferase (332 aa).

It belongs to the PlsX family. In terms of assembly, homodimer. Probably interacts with PlsY.

It is found in the cytoplasm. The catalysed reaction is a fatty acyl-[ACP] + phosphate = an acyl phosphate + holo-[ACP]. It functions in the pathway lipid metabolism; phospholipid metabolism. In terms of biological role, catalyzes the reversible formation of acyl-phosphate (acyl-PO(4)) from acyl-[acyl-carrier-protein] (acyl-ACP). This enzyme utilizes acyl-ACP as fatty acyl donor, but not acyl-CoA. This is Phosphate acyltransferase from Nitratiruptor sp. (strain SB155-2).